Reading from the N-terminus, the 557-residue chain is MAAQGFLLIATFLLVLMVLARPLGSGLARLINDIPLPGTTGVERVLFRALGVSDREMNWKQYLCAILGLNMLGLAVLFFMLLGQHYLPLNPQQLPGLSWDLALNTAVSFVTNTNWQSYSGETTLSYFSQMAGLTVQNFLSAASGIAVIFALIRAFTRQSMSTLGNAWVDLLRITLWVLVPVALLIALFFIQQGALQNFLPYQAVNTVEGAQQLLPMGPVASQEAIKMLGTNGGGFFNANSSHPFENPTALTNFVQMLAIFLIPTALCFAFGEVTGDRRQGRMLLWAMSVIFVICVGVVMWAEVQGNPHLLALGTDSSINMEGKESRFGVLVSSLFAVVTTAASCGAVIAMHDSFTALGGMVPMWLMQIGEVVFGGVGSGLYGMMLFVLLAVFIAGLMIGRTPEYLGKKIDVREMKLTALAILVTPTLVLMGAALAMMTDAGRSAMLNPGPHGFSEVLYAVSSAANNNGSAFAGLSANSPFWNCLLAFCMFVGRFGVIIPVMAIAGSLVSKKSQAASSGTLPTHGPLFVGLLIGTVLLVGALTFIPALALGPVAEYLS.

12 helical membrane passes run 5–25, 63–83, 132–152, 170–190, 253–273, 283–303, 329–349, 356–376, 379–399, 416–436, 484–504, and 526–546; these read GFLL…PLGS, LCAI…MLLG, GLTV…FALI, LLRI…LFFI, FVQM…FGEV, LLWA…WAEV, VLVS…AVIA, ALGG…FGGV, GLYG…LMIG, LTAL…ALAM, LLAF…MAIA, and LFVG…FIPA.

It belongs to the KdpA family. In terms of assembly, the system is composed of three essential subunits: KdpA, KdpB and KdpC.

The protein resides in the cell inner membrane. Its function is as follows. Part of the high-affinity ATP-driven potassium transport (or Kdp) system, which catalyzes the hydrolysis of ATP coupled with the electrogenic transport of potassium into the cytoplasm. This subunit binds the periplasmic potassium ions and delivers the ions to the membrane domain of KdpB through an intramembrane tunnel. This is Potassium-transporting ATPase potassium-binding subunit from Escherichia coli O9:H4 (strain HS).